The sequence spans 203 residues: Small ribosomal subunit protein uS4 (203 aa).

An S4 RNA-binding domain is found at 93-153 (RRFDNVVFRA…QKSQNLDAVA (61 aa)).

Belongs to the universal ribosomal protein uS4 family. As to quaternary structure, part of the 30S ribosomal subunit. Contacts protein S5. The interaction surface between S4 and S5 is involved in control of translational fidelity.

Its function is as follows. One of the primary rRNA binding proteins, it binds directly to 16S rRNA where it nucleates assembly of the body of the 30S subunit. With S5 and S12 plays an important role in translational accuracy. The polypeptide is Small ribosomal subunit protein uS4 (Chlorobium phaeobacteroides (strain BS1)).